The sequence spans 359 residues: Peptide chain release factor 1 (359 aa).

Position 233 is an N5-methylglutamine (glutamine 233).

The protein belongs to the prokaryotic/mitochondrial release factor family. In terms of processing, methylated by PrmC. Methylation increases the termination efficiency of RF1.

It is found in the cytoplasm. In terms of biological role, peptide chain release factor 1 directs the termination of translation in response to the peptide chain termination codons UAG and UAA. This is Peptide chain release factor 1 from Orientia tsutsugamushi (strain Ikeda) (Rickettsia tsutsugamushi).